The sequence spans 316 residues: Olfactory receptor 2AG2 (316 aa).

The Extracellular segment spans residues M1–T30. Residues N5 and N19 are each glycosylated (N-linked (GlcNAc...) asparagine). The helical transmembrane segment at F31–I51 threads the bilayer. Residues E52–H56 lie on the Cytoplasmic side of the membrane. The helical transmembrane segment at M57–V77 threads the bilayer. Residues T78 to C97 lie on the Extracellular side of the membrane. A disulfide bridge links C97 with C179. A helical transmembrane segment spans residues A98–M118. Residues A119–R139 lie on the Cytoplasmic side of the membrane. A helical transmembrane segment spans residues V140–T160. Over M161–T205 the chain is Extracellular. A helical transmembrane segment spans residues F206 to L226. The Cytoplasmic portion of the chain corresponds to R227–H244. Residues L245–F265 traverse the membrane as a helical segment. Residues H266 to D271 lie on the Extracellular side of the membrane. Residues N272 to L292 traverse the membrane as a helical segment. Residues R293 to L316 lie on the Cytoplasmic side of the membrane.

Belongs to the G-protein coupled receptor 1 family.

It is found in the cell membrane. Odorant receptor. The protein is Olfactory receptor 2AG2 (OR2AG2) of Homo sapiens (Human).